The primary structure comprises 463 residues: GTPase Der (463 aa).

EngA-type G domains follow at residues 27–190 and 200–373; these read PVVA…PEVG and RRVA…ASWD. GTP contacts are provided by residues 33 to 40, 80 to 84, 142 to 145, 206 to 213, 253 to 257, and 318 to 321; these read GRPNVGKS, DTGGW, NKVD, GKPNVGKS, DTAGL, and NKWD. In terms of domain architecture, KH-like spans 374 to 456; that stretch reads TRIATGPLNT…PIRVNVRVRE (83 aa).

The protein belongs to the TRAFAC class TrmE-Era-EngA-EngB-Septin-like GTPase superfamily. EngA (Der) GTPase family. As to quaternary structure, associates with the 50S ribosomal subunit.

In terms of biological role, GTPase that plays an essential role in the late steps of ribosome biogenesis. The polypeptide is GTPase Der (Mycobacterium bovis (strain ATCC BAA-935 / AF2122/97)).